Reading from the N-terminus, the 359-residue chain is Type II methyltransferase M.HinfI (359 aa).

The RAMA domain occupies 275–358; sequence KVPMKTLIEA…LDSLRYEYTN (84 aa).

It belongs to the N(4)/N(6)-methyltransferase family.

It carries out the reaction a 2'-deoxyadenosine in DNA + S-adenosyl-L-methionine = an N(6)-methyl-2'-deoxyadenosine in DNA + S-adenosyl-L-homocysteine + H(+). A beta subtype methylase that recognizes the double-stranded sequence 5'-GANTC-3', methylates A-2 on both strands, and protects the DNA from cleavage by the HinfI endonuclease. This is Type II methyltransferase M.HinfI (hinfIM) from Haemophilus influenzae.